The primary structure comprises 584 residues: 2-succinyl-5-enolpyruvyl-6-hydroxy-3-cyclohexene-1-carboxylate synthase (584 aa).

The disordered stretch occupies residues T563–V584. Residues E566–D577 are compositionally biased toward basic and acidic residues.

It belongs to the TPP enzyme family. MenD subfamily. In terms of assembly, homodimer. Requires Mg(2+) as cofactor. It depends on Mn(2+) as a cofactor. Thiamine diphosphate is required as a cofactor.

The enzyme catalyses isochorismate + 2-oxoglutarate + H(+) = 5-enolpyruvoyl-6-hydroxy-2-succinyl-cyclohex-3-ene-1-carboxylate + CO2. It functions in the pathway quinol/quinone metabolism; 1,4-dihydroxy-2-naphthoate biosynthesis; 1,4-dihydroxy-2-naphthoate from chorismate: step 2/7. Its pathway is quinol/quinone metabolism; menaquinone biosynthesis. Its function is as follows. Catalyzes the thiamine diphosphate-dependent decarboxylation of 2-oxoglutarate and the subsequent addition of the resulting succinic semialdehyde-thiamine pyrophosphate anion to isochorismate to yield 2-succinyl-5-enolpyruvyl-6-hydroxy-3-cyclohexene-1-carboxylate (SEPHCHC). This Halobacterium salinarum (strain ATCC 29341 / DSM 671 / R1) protein is 2-succinyl-5-enolpyruvyl-6-hydroxy-3-cyclohexene-1-carboxylate synthase.